Reading from the N-terminus, the 806-residue chain is Zygotic DNA replication licensing factor mcm3 (806 aa).

An MCM domain is found at 295–502; that stretch reads VFEQLSRSLA…HDREISDHVL (208 aa). Residue 345-352 participates in ATP binding; the sequence is GDPSVAKS. The Arginine finger motif lies at 477–480; sequence SRFD. A disordered region spans residues 662-738; it reads KKRRRREGES…TDSSAKPGLS (77 aa). The segment covering 693-702 has biased composition (basic and acidic residues); that stretch reads AQDGESHDPY.

The protein belongs to the MCM family. Component of the mcm2-7 complex (RLF-M). The complex forms a toroidal hexameric ring with the proposed subunit order mcm2-mcm6-mcm4-mcm7-mcm3-mcm5. Begins to associate with zmcm6 into mcm complexes at the neurula stage. Component of the CMG helicase complex, composed of the mcm2-7 complex, the GINS complex and cdc45.

It localises to the nucleus. Its subcellular location is the chromosome. It catalyses the reaction ATP + H2O = ADP + phosphate + H(+). Acts as a component of the mcm2-7 complex (mcm complex) which is the putative replicative helicase essential for 'once per cell cycle' DNA replication initiation and elongation in eukaryotic cells. The active ATPase sites in the mcm2-7 ring are formed through the interaction surfaces of two neighboring subunits such that a critical structure of a conserved arginine finger motif is provided in trans relative to the ATP-binding site of the Walker A box of the adjacent subunit. The six ATPase active sites, however, are likely to contribute differentially to the complex helicase activity. The existence of maternal and zygotic forms of mcm3 and mcm6 suggests that specific forms of mcm2-7 complexes may be used during different stages of development. This is Zygotic DNA replication licensing factor mcm3 from Xenopus laevis (African clawed frog).